Here is a 1826-residue protein sequence, read N- to C-terminus: Kinesin-like protein KIF13B (1826 aa).

Positions 5 to 353 constitute a Kinesin motor domain; sequence KVKVAVRIRP…LRYADRAKHI (349 aa). 103–110 contributes to the ATP binding site; sequence GQTGSGKS. The stretch at 364-439 forms a coiled coil; sequence NARIIRDLRE…ESLGISLQSS (76 aa). The 65-residue stretch at 471 to 535 folds into the FHA domain; the sequence is TLIGSANSQD…LHHGDRILWG (65 aa). The interval 546–582 is disordered; sequence KKKKKAEREDEDQDPSMKNENSSEQLDVDGDSSSEVS. Over residues 561–570 the composition is skewed to polar residues; the sequence is SMKNENSSEQ. Coiled-coil stretches lie at residues 607–710, 752–772, and 1096–1143; these read MQSI…LDKR, SLEKLDNRLLDMRDLYQEWKE, and LNAL…ERNA. Ser-661 is modified (phosphoserine). A disordered region spans residues 1367–1420; the sequence is EQLTGKGKLSRRSISSPNVNRLSGSRQDLIPSYSLGSNKGRWESQQDVSQTTVS. 2 stretches are compositionally biased toward polar residues: residues 1378 to 1392 and 1409 to 1420; these read RSISSPNVNRLSGSR and ESQQDVSQTTVS. A Phosphoserine modification is found at Ser-1379. Ser-1381 carries the phosphoserine; by MARK2 modification. 2 positions are modified to phosphoserine: Ser-1382 and Ser-1391. Position 1410 is a phosphoserine; by MARK2 (Ser-1410). 3 positions are modified to phosphoserine: Ser-1432, Ser-1438, and Ser-1537. Thr-1545 carries the phosphothreonine modification. Residue Ser-1559 is modified to Phosphoserine. The span at 1579 to 1607 shows a compositional bias: low complexity; it reads SDALGPGLDAAAPPGSMPTAPEAEPEAPI. 2 disordered regions span residues 1579 to 1650 and 1662 to 1698; these read SDAL…RVRR and MLAGDPGCSPGAEGNAPAPGAGGQALASDSEEADEVP. Pro residues predominate over residues 1608 to 1624; that stretch reads SHPPPPTAVPAEEPPGP. Residue Ser-1644 is modified to Phosphoserine. The segment covering 1671–1688 has biased composition (low complexity); it reads PGAEGNAPAPGAGGQALA. One can recognise a CAP-Gly domain in the interval 1721–1763; that stretch reads GPADFQEGTWVGVELDLPSGKNDGSIGGKQYFRCNPGYGLLVR. Ser-1797 is subject to Phosphoserine.

The protein belongs to the TRAFAC class myosin-kinesin ATPase superfamily. Kinesin family. As to quaternary structure, binds to DLG1 and DLG4. Interacts (when phosphorylated at Ser-1381 and Ser-1410) with 14-3-3. Phosphorylated at Ser-1381 and Ser-1410 by MARK2, promoting interaction with 14-3-3 and inhibiting microtubule-dependent accumulation and formation of axons. In terms of tissue distribution, ubiquitous.

Its subcellular location is the cytoplasm. The protein localises to the cytoskeleton. The protein resides in the cell projection. It is found in the axon. Functionally, involved in reorganization of the cortical cytoskeleton. Regulates axon formation by promoting the formation of extra axons. May be functionally important for the intracellular trafficking of MAGUKs and associated protein complexes. This Homo sapiens (Human) protein is Kinesin-like protein KIF13B (KIF13B).